The following is a 343-amino-acid chain: Phenylalanine--tRNA ligase alpha subunit (343 aa).

Residue E256 participates in Mg(2+) binding.

Belongs to the class-II aminoacyl-tRNA synthetase family. Phe-tRNA synthetase alpha subunit type 1 subfamily. As to quaternary structure, tetramer of two alpha and two beta subunits. Requires Mg(2+) as cofactor.

Its subcellular location is the cytoplasm. It catalyses the reaction tRNA(Phe) + L-phenylalanine + ATP = L-phenylalanyl-tRNA(Phe) + AMP + diphosphate + H(+). This Phytoplasma australiense protein is Phenylalanine--tRNA ligase alpha subunit.